The sequence spans 582 residues: Proline--tRNA ligase (582 aa).

The protein belongs to the class-II aminoacyl-tRNA synthetase family. ProS type 1 subfamily. In terms of assembly, homodimer.

It is found in the cytoplasm. The catalysed reaction is tRNA(Pro) + L-proline + ATP = L-prolyl-tRNA(Pro) + AMP + diphosphate. Catalyzes the attachment of proline to tRNA(Pro) in a two-step reaction: proline is first activated by ATP to form Pro-AMP and then transferred to the acceptor end of tRNA(Pro). As ProRS can inadvertently accommodate and process non-cognate amino acids such as alanine and cysteine, to avoid such errors it has two additional distinct editing activities against alanine. One activity is designated as 'pretransfer' editing and involves the tRNA(Pro)-independent hydrolysis of activated Ala-AMP. The other activity is designated 'posttransfer' editing and involves deacylation of mischarged Ala-tRNA(Pro). The misacylated Cys-tRNA(Pro) is not edited by ProRS. The polypeptide is Proline--tRNA ligase (Mycobacterium avium (strain 104)).